Here is a 427-residue protein sequence, read N- to C-terminus: Adenylosuccinate synthetase (427 aa).

Residues glycine 12–lysine 18 and glycine 40–threonine 42 each bind GTP. Aspartate 13 functions as the Proton acceptor in the catalytic mechanism. Aspartate 13 and glycine 40 together coordinate Mg(2+). IMP is bound by residues aspartate 13–lysine 16, asparagine 38–histidine 41, threonine 128, arginine 142, glutamine 223, threonine 238, and arginine 302. Histidine 41 acts as the Proton donor in catalysis. Position 298–304 (threonine 298–arginine 304) interacts with substrate. GTP contacts are provided by residues arginine 304, serine 330 to aspartate 332, and serine 412 to glycine 414.

Belongs to the adenylosuccinate synthetase family. In terms of assembly, homodimer. The cofactor is Mg(2+).

Its subcellular location is the cytoplasm. It carries out the reaction IMP + L-aspartate + GTP = N(6)-(1,2-dicarboxyethyl)-AMP + GDP + phosphate + 2 H(+). Its pathway is purine metabolism; AMP biosynthesis via de novo pathway; AMP from IMP: step 1/2. Plays an important role in the de novo pathway of purine nucleotide biosynthesis. Catalyzes the first committed step in the biosynthesis of AMP from IMP. The chain is Adenylosuccinate synthetase from Staphylococcus epidermidis (strain ATCC 35984 / DSM 28319 / BCRC 17069 / CCUG 31568 / BM 3577 / RP62A).